The primary structure comprises 351 residues: UDP-3-O-acylglucosamine N-acyltransferase (351 aa).

Histidine 257 functions as the Proton acceptor in the catalytic mechanism.

The protein belongs to the transferase hexapeptide repeat family. LpxD subfamily. In terms of assembly, homotrimer.

It catalyses the reaction a UDP-3-O-[(3R)-3-hydroxyacyl]-alpha-D-glucosamine + a (3R)-hydroxyacyl-[ACP] = a UDP-2-N,3-O-bis[(3R)-3-hydroxyacyl]-alpha-D-glucosamine + holo-[ACP] + H(+). The protein operates within bacterial outer membrane biogenesis; LPS lipid A biosynthesis. Catalyzes the N-acylation of UDP-3-O-acylglucosamine using 3-hydroxyacyl-ACP as the acyl donor. Is involved in the biosynthesis of lipid A, a phosphorylated glycolipid that anchors the lipopolysaccharide to the outer membrane of the cell. In Methylorubrum extorquens (strain PA1) (Methylobacterium extorquens), this protein is UDP-3-O-acylglucosamine N-acyltransferase.